Reading from the N-terminus, the 299-residue chain is ATP phosphoribosyltransferase (299 aa).

It belongs to the ATP phosphoribosyltransferase family. Long subfamily. As to quaternary structure, equilibrium between an active dimeric form, an inactive hexameric form and higher aggregates. Interconversion between the various forms is largely reversible and is influenced by the natural substrates and inhibitors of the enzyme. Mg(2+) serves as cofactor.

The protein resides in the cytoplasm. The catalysed reaction is 1-(5-phospho-beta-D-ribosyl)-ATP + diphosphate = 5-phospho-alpha-D-ribose 1-diphosphate + ATP. It participates in amino-acid biosynthesis; L-histidine biosynthesis; L-histidine from 5-phospho-alpha-D-ribose 1-diphosphate: step 1/9. Feedback inhibited by histidine. In terms of biological role, catalyzes the condensation of ATP and 5-phosphoribose 1-diphosphate to form N'-(5'-phosphoribosyl)-ATP (PR-ATP). Has a crucial role in the pathway because the rate of histidine biosynthesis seems to be controlled primarily by regulation of HisG enzymatic activity. The polypeptide is ATP phosphoribosyltransferase (Edwardsiella ictaluri (strain 93-146)).